The chain runs to 160 residues: uncharacterized protein (160 aa).

The residue at position 49 (tyrosine 49) is a Phosphotyrosine.

In terms of biological role, may be involved in the assembly, structure, or function of the flagellum. May polymerize to form a filamentous structure that is part of the flagellum. This is an uncharacterized protein from Bacillus subtilis (strain 168).